Here is a 402-residue protein sequence, read N- to C-terminus: Acetate kinase (402 aa).

A Mg(2+)-binding site is contributed by asparagine 13. Lysine 20 is a binding site for ATP. Position 94 (arginine 94) interacts with substrate. The Proton donor/acceptor role is filled by aspartate 151. ATP is bound by residues 211–215 (HLGNG), 285–287 (DFR), and 333–337 (GVGEN). Residue glutamate 387 participates in Mg(2+) binding.

This sequence belongs to the acetokinase family. In terms of assembly, homodimer. Mg(2+) is required as a cofactor. The cofactor is Mn(2+).

Its subcellular location is the cytoplasm. The enzyme catalyses acetate + ATP = acetyl phosphate + ADP. It functions in the pathway metabolic intermediate biosynthesis; acetyl-CoA biosynthesis; acetyl-CoA from acetate: step 1/2. Functionally, catalyzes the formation of acetyl phosphate from acetate and ATP. Can also catalyze the reverse reaction. The protein is Acetate kinase of Nocardia farcinica (strain IFM 10152).